A 59-amino-acid polypeptide reads, in one-letter code: UPF0181 protein YoaH (59 aa).

It belongs to the UPF0181 family.

The chain is UPF0181 protein YoaH from Shigella flexneri.